Reading from the N-terminus, the 403-residue chain is Phosphopentomutase (403 aa).

6 residues coordinate Mn(2+): D13, D298, H303, D339, H340, and H351.

It belongs to the phosphopentomutase family. Requires Mn(2+) as cofactor.

It is found in the cytoplasm. The enzyme catalyses 2-deoxy-alpha-D-ribose 1-phosphate = 2-deoxy-D-ribose 5-phosphate. It carries out the reaction alpha-D-ribose 1-phosphate = D-ribose 5-phosphate. It participates in carbohydrate degradation; 2-deoxy-D-ribose 1-phosphate degradation; D-glyceraldehyde 3-phosphate and acetaldehyde from 2-deoxy-alpha-D-ribose 1-phosphate: step 1/2. Its function is as follows. Isomerase that catalyzes the conversion of deoxy-ribose 1-phosphate (dRib-1-P) and ribose 1-phosphate (Rib-1-P) to deoxy-ribose 5-phosphate (dRib-5-P) and ribose 5-phosphate (Rib-5-P), respectively. This is Phosphopentomutase from Streptococcus pyogenes serotype M4 (strain MGAS10750).